Consider the following 192-residue polypeptide: Cytochrome c oxidase assembly protein CtaG (192 aa).

The Cytoplasmic segment spans residues 1 to 9; the sequence is MSLSPHQKT. Residues 10 to 30 form a helical; Signal-anchor for type II membrane protein membrane-spanning segment; sequence AGWLVGVVVVMGAASFAAVPF. At 31-192 the chain is on the periplasmic side; the sequence is YDWFCRVTGF…AARPAGIDVN (162 aa).

Belongs to the COX11/CtaG family.

The protein resides in the cell inner membrane. Exerts its effect at some terminal stage of cytochrome c oxidase synthesis, probably by being involved in the insertion of the copper B into subunit I. The polypeptide is Cytochrome c oxidase assembly protein CtaG (Cereibacter sphaeroides (strain ATCC 17025 / ATH 2.4.3) (Rhodobacter sphaeroides)).